Reading from the N-terminus, the 85-residue chain is Conotoxin Lt28.5 (85 aa).

Residues 1–21 (MPKLEMMLLVLLILPLCYIDA) form the signal peptide. Residues 22 to 40 (VGPPPPWNMEDEIIEHWQK) constitute a propeptide that is removed on maturation.

It belongs to the conotoxin D superfamily. In terms of processing, contains 5 disulfide bonds. In terms of tissue distribution, expressed by the venom duct.

The protein localises to the secreted. In terms of biological role, probable neurotoxin. The chain is Conotoxin Lt28.5 from Conus litteratus (Lettered cone).